Here is a 340-residue protein sequence, read N- to C-terminus: Proline-rich transmembrane protein 2 (340 aa).

Residues 1–261 form a disordered region; it reads MAASSSEISE…AGPGVEGGEG (261 aa). Over 1-268 the chain is Cytoplasmic; sequence MAASSSEISE…GEGTQKPRDY (268 aa). Over residues 9–18 the composition is skewed to basic and acidic residues; the sequence is SEMKGVEESP. Ser28 is subject to Phosphoserine. Thr74 is subject to Phosphothreonine. Composition is skewed to pro residues over residues 131-155 and 197-207; these read PPEPAPEPAPQPDPRPDSQPTPKPA and APEPHSPPSKK. Ser238 is modified (phosphoserine). At Arg240 the chain carries Omega-N-methylarginine. A phosphoserine mark is found at Ser248 and Ser249. The helical intramembrane region spans 269–289; it reads IILAILSCFCPMWPVNIVAFA. Topologically, residues 290-317 are cytoplasmic; sequence YAVMSRNSLQQGDVDGAQRLGRVAKLLS. A helical transmembrane segment spans residues 318-338; it reads IVALVGGVLIIIASCVINLGV. Topologically, residues 339–340 are extracellular; that stretch reads YK.

The protein belongs to the CD225/Dispanin family. Component of the outer core of AMPAR complex. AMPAR complex consists of an inner core made of 4 pore-forming GluA/GRIA proteins (GRIA1, GRIA2, GRIA3 and GRIA4) and 4 major auxiliary subunits arranged in a twofold symmetry. One of the two pairs of distinct binding sites is occupied either by CNIH2, CNIH3 or CACNG2, CACNG3. The other harbors CACNG2, CACNG3, CACNG4, CACNG8 or GSG1L. This inner core of AMPAR complex is complemented by outer core constituents binding directly to the GluA/GRIA proteins at sites distinct from the interaction sites of the inner core constituents. Outer core constituents include at least PRRT1, PRRT2, CKAMP44/SHISA9, FRRS1L and NRN1. The proteins of the inner and outer core serve as a platform for other, more peripherally associated AMPAR constituents. Alone or in combination, these auxiliary subunits control the gating and pharmacology of the AMPAR complex and profoundly impact their biogenesis and protein processing. Interacts with intersectin 1/ITSN1. Interacts with SNARE complex components, including SNAP25, STX1A, SYT1 and SYT2; this interaction may inhibit SNARE complex formation.

It localises to the cell membrane. The protein localises to the presynaptic cell membrane. Its subcellular location is the synapse. It is found in the cell projection. The protein resides in the axon. It localises to the cytoplasmic vesicle. The protein localises to the secretory vesicle. Its subcellular location is the synaptic vesicle membrane. It is found in the postsynaptic density membrane. The protein resides in the dendritic spine. As a component of the outer core of AMPAR complex, may be involved in synaptic transmission in the central nervous system. In hippocampal neurons, in presynaptic terminals, plays an important role in the final steps of neurotransmitter release, possibly by regulating Ca(2+)-sensing. In the cerebellum, may inhibit SNARE complex formation and down-regulate short-term facilitation. The sequence is that of Proline-rich transmembrane protein 2 (PRRT2) from Homo sapiens (Human).